The chain runs to 434 residues: Methylenetetrahydrofolate--tRNA-(uracil-5-)-methyltransferase TrmFO (434 aa).

9 to 14 (GAGLAG) serves as a coordination point for FAD.

Belongs to the MnmG family. TrmFO subfamily. Requires FAD as cofactor.

It localises to the cytoplasm. It carries out the reaction uridine(54) in tRNA + (6R)-5,10-methylene-5,6,7,8-tetrahydrofolate + NADH + H(+) = 5-methyluridine(54) in tRNA + (6S)-5,6,7,8-tetrahydrofolate + NAD(+). It catalyses the reaction uridine(54) in tRNA + (6R)-5,10-methylene-5,6,7,8-tetrahydrofolate + NADPH + H(+) = 5-methyluridine(54) in tRNA + (6S)-5,6,7,8-tetrahydrofolate + NADP(+). In terms of biological role, catalyzes the folate-dependent formation of 5-methyl-uridine at position 54 (M-5-U54) in all tRNAs. In Listeria monocytogenes serovar 1/2a (strain ATCC BAA-679 / EGD-e), this protein is Methylenetetrahydrofolate--tRNA-(uracil-5-)-methyltransferase TrmFO.